A 253-amino-acid chain; its full sequence is Acetylglutamate kinase (253 aa).

Substrate-binding positions include 40 to 41, Arg-62, and Asn-154; that span reads GG.

Belongs to the acetylglutamate kinase family. ArgB subfamily.

The protein resides in the cytoplasm. It catalyses the reaction N-acetyl-L-glutamate + ATP = N-acetyl-L-glutamyl 5-phosphate + ADP. The protein operates within amino-acid biosynthesis; L-arginine biosynthesis; N(2)-acetyl-L-ornithine from L-glutamate: step 2/4. In terms of biological role, catalyzes the ATP-dependent phosphorylation of N-acetyl-L-glutamate. This chain is Acetylglutamate kinase, found in Staphylococcus saprophyticus subsp. saprophyticus (strain ATCC 15305 / DSM 20229 / NCIMB 8711 / NCTC 7292 / S-41).